The primary structure comprises 409 residues: FBD-associated F-box protein At4g10400 (409 aa).

In terms of domain architecture, F-box spans 1 to 47; that stretch reads MDRISGLPDEVLVKILSFVPTKVAVSTSILSKRWEFLWMWLTKLKFG. Residues 330–379 enclose the FBD domain; it reads SWNQPSIVPECMLSSLQKFTWFKYLGRPQDRDIAVYILKNACRLRTATIK.

This Arabidopsis thaliana (Mouse-ear cress) protein is FBD-associated F-box protein At4g10400.